The sequence spans 228 residues: Ribulose-phosphate 3-epimerase-like protein 1 (228 aa).

Serine 10 provides a ligand contact to substrate. The a divalent metal cation site is built by histidine 35, aspartate 37, and histidine 70. The Proton acceptor role is filled by aspartate 37. Substrate is bound by residues histidine 70, 146 to 149 (GFGE), 175 to 177 (DGG), and 197 to 198 (GS). Aspartate 175 provides a ligand contact to a divalent metal cation. Residue aspartate 175 is the Proton donor of the active site.

Belongs to the ribulose-phosphate 3-epimerase family. In terms of assembly, homodimer. It depends on Fe(2+) as a cofactor. Mn(2+) serves as cofactor. Requires Zn(2+) as cofactor. Co(2+) is required as a cofactor.

The catalysed reaction is D-ribulose 5-phosphate = D-xylulose 5-phosphate. It participates in carbohydrate degradation. Its function is as follows. Catalyzes the reversible epimerization of D-ribulose 5-phosphate to D-xylulose 5-phosphate. The chain is Ribulose-phosphate 3-epimerase-like protein 1 (RPEL1) from Homo sapiens (Human).